Reading from the N-terminus, the 511-residue chain is Synaptotagmin-6 (511 aa).

Residues 1–59 are Vesicular-facing; the sequence is MSGVWGAGGPRCQAALAVLASLCRARPPPLGLDVETCRSFELQSPEQSPSAADSGTSVS. A cysteine motif region spans residues 12–38; that stretch reads CQAALAVLASLCRARPPPLGLDVETCR. Residues 60-80 traverse the membrane as a helical segment; that stretch reads LLAVVVIVCGVALVAVFLFLF. Over 81–511 the chain is Cytoplasmic; the sequence is WKLCWMPWRK…KSFKEGTPRL (431 aa). Disordered regions lie at residues 92-119 and 157-182; these read EASSPSSANPASETLQSPSSRGNMADKL and TKLQRQTTEPASSTRHTSFKRHLPRQ. Over residues 94–103 the composition is skewed to low complexity; the sequence is SSPSSANPAS. Polar residues-rich tracts occupy residues 104–113 and 160–172; these read ETLQSPSSRG and QRQTTEPASSTRH. Ser217 is modified (phosphoserine). 2 consecutive C2 domains span residues 230–351 and 362–495; these read SCGK…SIWK and DLGE…AHWH. 11 residues coordinate Ca(2+): Asp261, Asp267, Asp319, Phe320, Asp321, Ser324, Asp327, Asp393, Asp399, Asp453, and Asp455. Residues 483–511 form a necessary for cell membrane association (isoform 2) region; that stretch reads MLAYPRKPIAHWHSLVEVKKSFKEGTPRL.

Belongs to the synaptotagmin family. Isoform 1: Homodimer; disulfide-linked via the cysteine motif. Isoform 1: Can also form heterodimers with SYT3, SYT7, SYT9 and SYT10. Isoform 1: Interacts with STX1A, STX1B and STX2; the interaction is Ca(2+)-dependent. Isoform 2: Is not able to form homodimer and heterodimers. Requires Ca(2+) as cofactor. Isoform 1 is expressed in the olfactory bulb. Isoform 2 is expressed in the brain (at protein level).

The protein resides in the cytoplasmic vesicle. It is found in the secretory vesicle. It localises to the synaptic vesicle membrane. The protein localises to the membrane. Its subcellular location is the cytoplasm. The protein resides in the cytosol. It is found in the cell membrane. May be involved in Ca(2+)-dependent exocytosis of secretory vesicles through Ca(2+) and phospholipid binding to the C2 domain or may serve as Ca(2+) sensors in the process of vesicular trafficking and exocytosis. May mediate Ca(2+)-regulation of exocytosis in acrosomal reaction in sperm. This chain is Synaptotagmin-6 (Syt6), found in Mus musculus (Mouse).